Consider the following 103-residue polypeptide: uncharacterized protein (103 aa).

Positions 1 to 10 (MVVKKSKPKN) are enriched in basic residues. Disordered regions lie at residues 1-38 (MVVK…KGKK) and 77-103 (AVFS…NEKK).

This is an uncharacterized protein from Schizosaccharomyces pombe (strain 972 / ATCC 24843) (Fission yeast).